The following is a 540-amino-acid chain: Ubiquitin carboxyl-terminal hydrolase 17-like protein E (540 aa).

Residues 1–22 (MVVSLSFPEETGGENLPSAPLE) form a disordered region. The 298-residue stretch at 85–382 (CGLQNTGNSC…NAYVLFYVQQ (298 aa)) folds into the USP domain. C94 serves as the catalytic Nucleophile. Catalysis depends on H341, which acts as the Proton acceptor. Basic and acidic residues-rich tracts occupy residues 431 to 441 (NREKRAKKETS) and 508 to 520 (APDKENQPWHNGD). 2 disordered regions span residues 431–461 (NREKRAKKETSLGEGKVPQEVNHEKAGQKHG) and 499–540 (RSTA…QGGR). Positions 523–540 (LTSQGLMSPGQLCSQGGR) are enriched in polar residues.

This sequence belongs to the peptidase C19 family. USP17 subfamily. In terms of assembly, interacts with SUDS3; the interaction is direct.

The protein localises to the nucleus. It is found in the endoplasmic reticulum. It catalyses the reaction Thiol-dependent hydrolysis of ester, thioester, amide, peptide and isopeptide bonds formed by the C-terminal Gly of ubiquitin (a 76-residue protein attached to proteins as an intracellular targeting signal).. Deubiquitinating enzyme that removes conjugated ubiquitin from specific proteins to regulate different cellular processes that may include cell proliferation, progression through the cell cycle, apoptosis, cell migration, and the cellular response to viral infection. The polypeptide is Ubiquitin carboxyl-terminal hydrolase 17-like protein E (Usp17le) (Mus musculus (Mouse)).